The sequence spans 25 residues: Antimicrobial peptide 3 (25 aa).

Skin.

The protein localises to the secreted. Has antibacterial activity against Gram-positive bacterium S.aureus and Gram-negative bacterium E.coli, when in combination with XT1 and XT6. This Xenopus tropicalis (Western clawed frog) protein is Antimicrobial peptide 3.